The primary structure comprises 623 residues: E3 ubiquitin-protein ligase ORTHRUS 5 (623 aa).

Residues 12 to 62 (DGVCMRCQVNPPSEETLTCGTCVTPWHVSCLLPESLASSTGDWECPDCSGV) form a PHD-type zinc finger. Residues 129–169 (CSICIQLPERPVTTPCGHNFCLKCFEKWAVGQGKLTCMICR) form an RING-type 1 zinc finger. The region spanning 258–407 (TRNQGVLVGE…HKMCRYLFVR (150 aa)) is the YDG domain. The RING-type 2 zinc-finger motif lies at 498–555 (CQICRKVLSLPVTTPCAHNFCKACLEAKFAGITQLRDRSNGVRKLRAKKNIMTCPCCT). The segment at 580–623 (KSEEEAEVAESSNISEEEGEEESEPPTKKIKMDKNSVGGTSLSA) is disordered. A compositionally biased stretch (acidic residues) spans 594 to 603 (SEEEGEEESE). Basic and acidic residues predominate over residues 604–613 (PPTKKIKMDK).

As to expression, expressed in inflorescences.

Its subcellular location is the nucleus. The catalysed reaction is S-ubiquitinyl-[E2 ubiquitin-conjugating enzyme]-L-cysteine + [acceptor protein]-L-lysine = [E2 ubiquitin-conjugating enzyme]-L-cysteine + N(6)-ubiquitinyl-[acceptor protein]-L-lysine.. It participates in protein modification; protein ubiquitination. In terms of biological role, E3 ubiquitin-protein ligase. Participates in CpG methylation-dependent transcriptional regulation and epigenetic transcriptional silencing. Mediates ubiquitination with the E2 ubiquitin-conjugating enzyme UBC11. This Arabidopsis thaliana (Mouse-ear cress) protein is E3 ubiquitin-protein ligase ORTHRUS 5 (ORTH5).